The chain runs to 147 residues: Hemoglobin subunit beta-1 (147 aa).

The Globin domain occupies 3–147 (EWTAAERRHV…VVSALGRQYH (145 aa)). Residues histidine 64 and histidine 93 each coordinate heme b.

It belongs to the globin family. In terms of assembly, hb 1 is a heterotetramer of two alpha-1 and two beta-1 chains. In terms of tissue distribution, red blood cells.

In terms of biological role, involved in oxygen transport from gills to the various peripheral tissues. This chain is Hemoglobin subunit beta-1 (hbb1), found in Gadus morhua (Atlantic cod).